The primary structure comprises 1141 residues: Isoleucine--tRNA ligase (1141 aa).

The short motif at 50-60 (PSANGMPGIHH) is the 'HIGH' region element. A 'KMSKS' region motif is present at residues 689 to 693 (KMSKR). Lys-692 provides a ligand contact to ATP.

It belongs to the class-I aminoacyl-tRNA synthetase family. IleS type 2 subfamily. In terms of assembly, monomer. It depends on Zn(2+) as a cofactor.

The protein resides in the cytoplasm. The catalysed reaction is tRNA(Ile) + L-isoleucine + ATP = L-isoleucyl-tRNA(Ile) + AMP + diphosphate. In terms of biological role, catalyzes the attachment of isoleucine to tRNA(Ile). As IleRS can inadvertently accommodate and process structurally similar amino acids such as valine, to avoid such errors it has two additional distinct tRNA(Ile)-dependent editing activities. One activity is designated as 'pretransfer' editing and involves the hydrolysis of activated Val-AMP. The other activity is designated 'posttransfer' editing and involves deacylation of mischarged Val-tRNA(Ile). In Bacteroides fragilis (strain YCH46), this protein is Isoleucine--tRNA ligase.